The following is a 92-amino-acid chain: uncharacterized protein (92 aa).

The protein belongs to the IUNH family.

This is an uncharacterized protein from Corynebacterium ammoniagenes (Brevibacterium ammoniagenes).